The following is a 363-amino-acid chain: Phosphoserine aminotransferase (363 aa).

Arg-42 contributes to the L-glutamate binding site. Residues Gly-76–Arg-77, Trp-102, Thr-156, Asp-175, and Gln-198 contribute to the pyridoxal 5'-phosphate site. At Lys-199 the chain carries N6-(pyridoxal phosphate)lysine. Asn-240–Thr-241 lines the pyridoxal 5'-phosphate pocket.

The protein belongs to the class-V pyridoxal-phosphate-dependent aminotransferase family. SerC subfamily. Homodimer. The cofactor is pyridoxal 5'-phosphate.

It is found in the cytoplasm. It carries out the reaction O-phospho-L-serine + 2-oxoglutarate = 3-phosphooxypyruvate + L-glutamate. The enzyme catalyses 4-(phosphooxy)-L-threonine + 2-oxoglutarate = (R)-3-hydroxy-2-oxo-4-phosphooxybutanoate + L-glutamate. It participates in amino-acid biosynthesis; L-serine biosynthesis; L-serine from 3-phospho-D-glycerate: step 2/3. The protein operates within cofactor biosynthesis; pyridoxine 5'-phosphate biosynthesis; pyridoxine 5'-phosphate from D-erythrose 4-phosphate: step 3/5. Catalyzes the reversible conversion of 3-phosphohydroxypyruvate to phosphoserine and of 3-hydroxy-2-oxo-4-phosphonooxybutanoate to phosphohydroxythreonine. This is Phosphoserine aminotransferase from Shewanella sp. (strain W3-18-1).